The chain runs to 385 residues: Nuclear hormone receptor family member nhr-68 (385 aa).

The nuclear receptor DNA-binding region spans 4–79 (KEVCLVCQDF…VGMDKTSLQA (76 aa)). 2 consecutive NR C4-type zinc fingers follow at residues 7 to 27 (CLVC…CNGC) and 43 to 62 (CQFD…CRFC). The tract at residues 81 to 110 (RDPIGYTKRNKKTLRHPMNELSGDESNSCT) is disordered. The NR LBD domain occupies 145-384 (PKRSLKQALC…SFAKELIFGD (240 aa)). Residues 373–384 (FTSFAKELIFGD) are AF-2.

The protein belongs to the nuclear hormone receptor family.

The protein localises to the nucleus. In terms of biological role, probable transcription factor that acts in a feed-forward loop with nhr-10 to activate genes, including itself, involved in the vitamin B12-independent breakdown of the short-chain fatty acid propionate. This pathway is triggered in response to a diet low in vitamin B12, when canonical vitamin B12-dependent propionate breakdown cannot function; the resulting accumulation of propionate is probably sensed by nhr-68 and/or nhr-10. In Caenorhabditis elegans, this protein is Nuclear hormone receptor family member nhr-68.